A 525-amino-acid polypeptide reads, in one-letter code: Signal recognition particle protein (525 aa).

Residues 107–114 (GLQGSGKT), 196–200 (DTAGR), and 254–257 (TKLD) each bind GTP. The segment at 437 to 525 (GMGIPGIGRK…LSKLKFPGKK (89 aa)) is disordered. Basic residues predominate over residues 447 to 467 (SATRKSKGAKGKSGKKSKKGT). The span at 480-497 (GVPGMPGLAGLPGGLPDL) shows a compositional bias: low complexity.

This sequence belongs to the GTP-binding SRP family. SRP54 subfamily. Part of the signal recognition particle protein translocation system, which is composed of SRP and FtsY.

It localises to the cytoplasm. It catalyses the reaction GTP + H2O = GDP + phosphate + H(+). Functionally, involved in targeting and insertion of nascent membrane proteins into the cytoplasmic membrane. Binds to the hydrophobic signal sequence of the ribosome-nascent chain (RNC) as it emerges from the ribosomes. The SRP-RNC complex is then targeted to the cytoplasmic membrane where it interacts with the SRP receptor FtsY. This Mycobacterium bovis (strain ATCC BAA-935 / AF2122/97) protein is Signal recognition particle protein.